Here is a 458-residue protein sequence, read N- to C-terminus: Glutamyl-tRNA reductase (458 aa).

Residues 49–52 (TCNR), Ser109, 114–116 (EQQ), and Gln120 contribute to the substrate site. Cys50 serves as the catalytic Nucleophile. NADP(+) is bound at residue 191 to 196 (GAGAMA).

Belongs to the glutamyl-tRNA reductase family. Homodimer.

It carries out the reaction (S)-4-amino-5-oxopentanoate + tRNA(Glu) + NADP(+) = L-glutamyl-tRNA(Glu) + NADPH + H(+). Its pathway is porphyrin-containing compound metabolism; protoporphyrin-IX biosynthesis; 5-aminolevulinate from L-glutamyl-tRNA(Glu): step 1/2. Catalyzes the NADPH-dependent reduction of glutamyl-tRNA(Glu) to glutamate 1-semialdehyde (GSA). This Corynebacterium aurimucosum (strain ATCC 700975 / DSM 44827 / CIP 107346 / CN-1) (Corynebacterium nigricans) protein is Glutamyl-tRNA reductase.